The chain runs to 306 residues: Acetyl-coenzyme A carboxylase carboxyl transferase subunit beta (306 aa).

Residues 28 to 297 (LWIKCPDTGQ…TPAGKPSTPV (270 aa)) form the CoA carboxyltransferase N-terminal domain. Residues 287-306 (QTPAGKPSTPVAPEPVPDAA) form a disordered region. Over residues 296–306 (PVAPEPVPDAA) the composition is skewed to pro residues.

The protein belongs to the AccD/PCCB family. In terms of assembly, acetyl-CoA carboxylase is a heterohexamer composed of biotin carboxyl carrier protein (AccB), biotin carboxylase (AccC) and two subunits each of ACCase subunit alpha (AccA) and ACCase subunit beta (AccD).

It is found in the cytoplasm. It carries out the reaction N(6)-carboxybiotinyl-L-lysyl-[protein] + acetyl-CoA = N(6)-biotinyl-L-lysyl-[protein] + malonyl-CoA. It participates in lipid metabolism; malonyl-CoA biosynthesis; malonyl-CoA from acetyl-CoA: step 1/1. Component of the acetyl coenzyme A carboxylase (ACC) complex. Biotin carboxylase (BC) catalyzes the carboxylation of biotin on its carrier protein (BCCP) and then the CO(2) group is transferred by the transcarboxylase to acetyl-CoA to form malonyl-CoA. The sequence is that of Acetyl-coenzyme A carboxylase carboxyl transferase subunit beta from Methylorubrum populi (strain ATCC BAA-705 / NCIMB 13946 / BJ001) (Methylobacterium populi).